Consider the following 370-residue polypeptide: MKPSIYAFSQANLVDWILENGEKKFRATQIWEWLYRSRVQSFAEMTNLPKSLIEKLEEHFVVNPLKQRIVQESKDGTIKYLFELPDGMLIETVLMHQHYGLSVCVTTQVGCNIGCTFCASGLIPKQRDLTSGEIVAQIMLVQKYLDERNQNERVSHIVVMGIGEPLDNYDNVMTFLRVVNDDKGLAIGARHITVSTSGLAPKIREFAREGVQVNLAVSLHAPNNDLRSSIMRINRKFPIEVLFEAIEDYIKVTNRRVTFEYIMLNEVNDGVEQAQELADLTKNIRKLSYINLIPYNPVSEHDQYSRSTKERTLAFFDVLKKNGVNCVVRQEHGTDIDAACGQLRSNTLKKDREKARARIAAAKAKAGIRA.

Glutamate 91 (proton acceptor) is an active-site residue. The region spanning 97 to 329 (QHYGLSVCVT…KKNGVNCVVR (233 aa)) is the Radical SAM core domain. The cysteines at positions 104 and 340 are disulfide-linked. The [4Fe-4S] cluster site is built by cysteine 111, cysteine 115, and cysteine 118. S-adenosyl-L-methionine-binding positions include 163-164 (GE), serine 195, 218-220 (SLH), and asparagine 296. Catalysis depends on cysteine 340, which acts as the S-methylcysteine intermediate.

Belongs to the radical SAM superfamily. RlmN family. It depends on [4Fe-4S] cluster as a cofactor.

It is found in the cytoplasm. The enzyme catalyses adenosine(2503) in 23S rRNA + 2 reduced [2Fe-2S]-[ferredoxin] + 2 S-adenosyl-L-methionine = 2-methyladenosine(2503) in 23S rRNA + 5'-deoxyadenosine + L-methionine + 2 oxidized [2Fe-2S]-[ferredoxin] + S-adenosyl-L-homocysteine. The catalysed reaction is adenosine(37) in tRNA + 2 reduced [2Fe-2S]-[ferredoxin] + 2 S-adenosyl-L-methionine = 2-methyladenosine(37) in tRNA + 5'-deoxyadenosine + L-methionine + 2 oxidized [2Fe-2S]-[ferredoxin] + S-adenosyl-L-homocysteine. Functionally, specifically methylates position 2 of adenine 2503 in 23S rRNA and position 2 of adenine 37 in tRNAs. The chain is Probable dual-specificity RNA methyltransferase RlmN from Streptococcus suis (strain 98HAH33).